The sequence spans 65 residues: Large ribosomal subunit protein bL35 (65 aa).

Basic residues-rich tracts occupy residues 1–16 (MPKM…RFKK) and 31–45 (HRFH…RQLR). The segment at 1–47 (MPKMKTHRASAKRFKKTANGGLKSASAYTSHRFHGKTKKQRRQLRGT) is disordered.

This sequence belongs to the bacterial ribosomal protein bL35 family.

The chain is Large ribosomal subunit protein bL35 from Leuconostoc citreum (strain KM20).